The sequence spans 1330 residues: Ubinuclein-2 (1330 aa).

The interval 1-113 (MAEPRRVAFI…PPPRPPKETV (113 aa)) is disordered. At serine 13 the chain carries Phosphoserine. Composition is skewed to basic and acidic residues over residues 16–31 (RRRE…EPPR) and 55–67 (ARDK…EVSR). Pro residues predominate over residues 81–96 (PEPPPPPLPLQTPPPR). Threonine 229 carries the post-translational modification Phosphothreonine. Position 236 is a phosphoserine (serine 236). 2 disordered regions span residues 236-304 (SDTE…KKRY) and 322-345 (DALK…PKPP). Threonine 238 is modified (phosphothreonine). Lysine 258 is covalently cross-linked (Glycyl lysine isopeptide (Lys-Gly) (interchain with G-Cter in SUMO2)). At serine 297 the chain carries Phosphoserine. A phosphoserine mark is found at serine 402, serine 405, serine 408, and serine 570. Disordered regions lie at residues 559–583 (LQAD…KRVI), 767–789 (NKGP…GLRE), 801–835 (LATP…DLAH), 866–909 (GLQR…SLTQ), 964–991 (YRLP…APST), 1021–1202 (PKLA…SSVV), and 1292–1330 (PGTQ…RKPQ). Residues 560 to 570 (QADEEREKNGS) show a composition bias toward basic and acidic residues. Composition is skewed to polar residues over residues 767–780 (NKGP…NVPT) and 809–818 (SPQTAHSSSL). The segment covering 866-895 (GLQRSSQIHASSSQTHVSSSQAQAAASSHA) has biased composition (low complexity). Polar residues-rich tracts occupy residues 899–909 (SEAQDASSLTQ) and 969–980 (STPSPGNGSQGS). Residues 1030-1044 (ATSPKPLTSPKPSVS) are compositionally biased toward pro residues. Low complexity predominate over residues 1045–1056 (PKPSLSAKPSVS). Lysine 1052 bears the N6-acetyllysine mark. Polar residues-rich tracts occupy residues 1073 to 1148 (PSSS…NSLS), 1158 to 1169 (RGSNLNSSGANR), and 1308 to 1317 (HLQQAFNDGG). Serine 1107 carries the post-translational modification Phosphoserine. N6-acetyllysine is present on lysine 1132. Residues 1321 to 1330 (GDTKLPRKPQ) show a composition bias toward basic and acidic residues.

It belongs to the ubinuclein family.

This chain is Ubinuclein-2 (Ubn2), found in Rattus norvegicus (Rat).